We begin with the raw amino-acid sequence, 370 residues long: Flagellar P-ring protein 1 (370 aa).

An N-terminal signal peptide occupies residues 1 to 25; that stretch reads MSVLIKTRHCFVLLGLWLVLPTASA.

The protein belongs to the FlgI family. As to quaternary structure, the basal body constitutes a major portion of the flagellar organelle and consists of four rings (L,P,S, and M) mounted on a central rod.

Its subcellular location is the periplasm. It localises to the bacterial flagellum basal body. In terms of biological role, assembles around the rod to form the L-ring and probably protects the motor/basal body from shearing forces during rotation. The protein is Flagellar P-ring protein 1 of Yersinia pestis.